We begin with the raw amino-acid sequence, 351 residues long: Cyanide hydratase (351 aa).

Positions 6-285 (YKAAAVTSEP…DGLLFVDIDL (280 aa)) constitute a CN hydrolase domain. Glu46 functions as the Proton acceptor in the catalytic mechanism. Residue Lys128 is part of the active site. The active-site Nucleophile is Cys163.

It belongs to the carbon-nitrogen hydrolase superfamily. Nitrilase family. As to quaternary structure, oligomer of dimers, forming left-handed helical fibers with a diameter of 13 nm but with lengths ranging from approximately 1 um at the leading edge of the peak to having approximately the same length and diameter at the trailing edge.

The enzyme catalyses formamide = hydrogen cyanide + H2O. Its function is as follows. Catalyzes the hydration of cyanide to formamide. Degradation of cyanide may be important for plant pathogenic fungi in infection of cyanogenic plants. This is Cyanide hydratase from Neurospora crassa (strain ATCC 24698 / 74-OR23-1A / CBS 708.71 / DSM 1257 / FGSC 987).